Here is a 145-residue protein sequence, read N- to C-terminus: D-aminoacyl-tRNA deacylase (145 aa).

Residues 137–138 (GP) carry the Gly-cisPro motif, important for rejection of L-amino acids motif.

It belongs to the DTD family. In terms of assembly, homodimer.

Its subcellular location is the cytoplasm. It catalyses the reaction glycyl-tRNA(Ala) + H2O = tRNA(Ala) + glycine + H(+). The catalysed reaction is a D-aminoacyl-tRNA + H2O = a tRNA + a D-alpha-amino acid + H(+). In terms of biological role, an aminoacyl-tRNA editing enzyme that deacylates mischarged D-aminoacyl-tRNAs. Also deacylates mischarged glycyl-tRNA(Ala), protecting cells against glycine mischarging by AlaRS. Acts via tRNA-based rather than protein-based catalysis; rejects L-amino acids rather than detecting D-amino acids in the active site. By recycling D-aminoacyl-tRNA to D-amino acids and free tRNA molecules, this enzyme counteracts the toxicity associated with the formation of D-aminoacyl-tRNA entities in vivo and helps enforce protein L-homochirality. The chain is D-aminoacyl-tRNA deacylase from Colwellia psychrerythraea (strain 34H / ATCC BAA-681) (Vibrio psychroerythus).